The sequence spans 226 residues: Ornithine decarboxylase antizyme (226 aa).

Belongs to the ODC antizyme family. As to quaternary structure, interacts with ODC and thereby sterically blocks ODC homodimerization.

Its function is as follows. Ornithine decarboxylase (ODC) antizyme protein that negatively regulates ODC activity and intracellular polyamine biosynthesis in response to increased intracellular polyamine levels. Binds to ODC monomers, inhibiting the assembly of the functional ODC homodimer, and targets the monomers for ubiquitin-independent proteolytic destruction by the 26S proteasome. In Schizosaccharomyces pombe (strain 972 / ATCC 24843) (Fission yeast), this protein is Ornithine decarboxylase antizyme (spa1).